Here is a 486-residue protein sequence, read N- to C-terminus: tRNA sulfurtransferase (486 aa).

The THUMP domain maps to 60 to 166 (QKICAMLINI…DNQLFIIIKR (107 aa)). ATP-binding positions include 184–185 (LI), lysine 266, glycine 288, and glutamine 297. Residues cysteine 345 and cysteine 458 are joined by a disulfide bond. A Rhodanese domain is found at 406–484 (LDSTDVVLDI…GFSNVKIYRP (79 aa)). Cysteine 458 (cysteine persulfide intermediate) is an active-site residue.

It belongs to the ThiI family.

Its subcellular location is the cytoplasm. It catalyses the reaction [ThiI sulfur-carrier protein]-S-sulfanyl-L-cysteine + a uridine in tRNA + 2 reduced [2Fe-2S]-[ferredoxin] + ATP + H(+) = [ThiI sulfur-carrier protein]-L-cysteine + a 4-thiouridine in tRNA + 2 oxidized [2Fe-2S]-[ferredoxin] + AMP + diphosphate. It carries out the reaction [ThiS sulfur-carrier protein]-C-terminal Gly-Gly-AMP + S-sulfanyl-L-cysteinyl-[cysteine desulfurase] + AH2 = [ThiS sulfur-carrier protein]-C-terminal-Gly-aminoethanethioate + L-cysteinyl-[cysteine desulfurase] + A + AMP + 2 H(+). Its pathway is cofactor biosynthesis; thiamine diphosphate biosynthesis. Functionally, catalyzes the ATP-dependent transfer of a sulfur to tRNA to produce 4-thiouridine in position 8 of tRNAs, which functions as a near-UV photosensor. Also catalyzes the transfer of sulfur to the sulfur carrier protein ThiS, forming ThiS-thiocarboxylate. This is a step in the synthesis of thiazole, in the thiamine biosynthesis pathway. The sulfur is donated as persulfide by IscS. The protein is tRNA sulfurtransferase of Blochmanniella pennsylvanica (strain BPEN).